Consider the following 141-residue polypeptide: Large ribosomal subunit protein uL16 (141 aa).

This sequence belongs to the universal ribosomal protein uL16 family. As to quaternary structure, part of the 50S ribosomal subunit.

Its function is as follows. Binds 23S rRNA and is also seen to make contacts with the A and possibly P site tRNAs. The sequence is that of Large ribosomal subunit protein uL16 from Aliarcobacter butzleri (strain RM4018) (Arcobacter butzleri).